A 360-amino-acid polypeptide reads, in one-letter code: uncharacterized protein (360 aa).

The region spanning 11–40 is the 4Fe-4S ferredoxin-type domain; sequence KEEVWDTNRCSGCGACVAVCPVNNLYFREE.

The protein belongs to the FrhB family.

This is an uncharacterized protein from Methanocaldococcus jannaschii (strain ATCC 43067 / DSM 2661 / JAL-1 / JCM 10045 / NBRC 100440) (Methanococcus jannaschii).